A 149-amino-acid chain; its full sequence is MGIIAQNKISSLGMLFGAIALMMGIIHFSFGPFSAPPPTFESIVADKTAEIKRGLLAGIKGEKITTVEKKEDVDVDKILNQSGIALAIAALLCAFIGGMRKENRWGIRGALVFGGGTLAFHTLLFGIGIVCSILLIFLIFSFLTGGSLV.

Residues 1–8 (MGIIAQNK) are Cytoplasmic-facing. The helical transmembrane segment at 9–31 (ISSLGMLFGAIALMMGIIHFSFG) threads the bilayer. The Periplasmic portion of the chain corresponds to 32–77 (PFSAPPPTFESIVADKTAEIKRGLLAGIKGEKITTVEKKEDVDVDK). A helical membrane pass occupies residues 78 to 97 (ILNQSGIALAIAALLCAFIG). Over 98–117 (GMRKENRWGIRGALVFGGGT) the chain is Cytoplasmic. Residues 118-140 (LAFHTLLFGIGIVCSILLIFLIF) form a helical membrane-spanning segment. Residues 141–149 (SFLTGGSLV) are Periplasmic-facing.

The protein resides in the cell inner membrane. This chain is Inner membrane protein YidI (yidI), found in Escherichia coli (strain K12).